The primary structure comprises 470 residues: Proline--tRNA ligase (470 aa).

This sequence belongs to the class-II aminoacyl-tRNA synthetase family. ProS type 3 subfamily. In terms of assembly, homodimer.

It is found in the cytoplasm. It carries out the reaction tRNA(Pro) + L-proline + ATP = L-prolyl-tRNA(Pro) + AMP + diphosphate. Its function is as follows. Catalyzes the attachment of proline to tRNA(Pro) in a two-step reaction: proline is first activated by ATP to form Pro-AMP and then transferred to the acceptor end of tRNA(Pro). This is Proline--tRNA ligase from Malacoplasma penetrans (strain HF-2) (Mycoplasma penetrans).